The sequence spans 164 residues: CDP-archaeol synthase (164 aa).

Transmembrane regions (helical) follow at residues 3-23 (LTVF…AVFA), 55-75 (AIGI…YHVI), 77-97 (VFDA…GAFI), and 122-142 (FLVY…AVVI).

It belongs to the CDP-archaeol synthase family. The cofactor is Mg(2+).

The protein localises to the cell membrane. It carries out the reaction 2,3-bis-O-(geranylgeranyl)-sn-glycerol 1-phosphate + CTP + H(+) = CDP-2,3-bis-O-(geranylgeranyl)-sn-glycerol + diphosphate. It participates in membrane lipid metabolism; glycerophospholipid metabolism. Catalyzes the formation of CDP-2,3-bis-(O-geranylgeranyl)-sn-glycerol (CDP-archaeol) from 2,3-bis-(O-geranylgeranyl)-sn-glycerol 1-phosphate (DGGGP) and CTP. This reaction is the third ether-bond-formation step in the biosynthesis of archaeal membrane lipids. The protein is CDP-archaeol synthase of Pyrobaculum aerophilum (strain ATCC 51768 / DSM 7523 / JCM 9630 / CIP 104966 / NBRC 100827 / IM2).